A 98-amino-acid chain; its full sequence is Small ribosomal subunit protein uS19 (98 aa).

It belongs to the universal ribosomal protein uS19 family.

Functionally, protein S19 forms a complex with S13 that binds strongly to the 16S ribosomal RNA. The chain is Small ribosomal subunit protein uS19 from Chlorobaculum parvum (strain DSM 263 / NCIMB 8327) (Chlorobium vibrioforme subsp. thiosulfatophilum).